The sequence spans 248 residues: Triosephosphate isomerase (248 aa).

9 to 11 (NWK) is a binding site for substrate. The active-site Electrophile is the H94. Residue E164 is the Proton acceptor of the active site. Residues G170, S209, and 230–231 (GG) contribute to the substrate site.

It belongs to the triosephosphate isomerase family. In terms of assembly, homodimer.

It localises to the cytoplasm. The catalysed reaction is D-glyceraldehyde 3-phosphate = dihydroxyacetone phosphate. Its pathway is carbohydrate biosynthesis; gluconeogenesis. The protein operates within carbohydrate degradation; glycolysis; D-glyceraldehyde 3-phosphate from glycerone phosphate: step 1/1. In terms of biological role, involved in the gluconeogenesis. Catalyzes stereospecifically the conversion of dihydroxyacetone phosphate (DHAP) to D-glyceraldehyde-3-phosphate (G3P). This is Triosephosphate isomerase from Hahella chejuensis (strain KCTC 2396).